A 765-amino-acid chain; its full sequence is Membrane metallo-endopeptidase-like 1 (765 aa).

Topologically, residues 1-19 (MVERAGWCRKKSPGFVEYG) are cytoplasmic. A helical; Signal-anchor for type II membrane protein transmembrane segment spans residues 20 to 40 (LMVLLLLLLGAIVTLGVFYSI). Over 41-765 (GKQLPLLTSL…MHPMKRCRIW (725 aa)) the chain is Lumenal. One can recognise a Peptidase M13 domain in the interval 74–765 (ICTTPSCVIA…MHPMKRCRIW (692 aa)). Disulfide bonds link cysteine 75/cysteine 80, cysteine 98/cysteine 750, cysteine 106/cysteine 710, cysteine 161/cysteine 425, and cysteine 636/cysteine 762. Position 121 (arginine 121) interacts with a peptide. Asparagine 163, asparagine 279, asparagine 303, and asparagine 336 each carry an N-linked (GlcNAc...) asparagine glycan. Residues 523–549 (FENGLQNLKNNAQRSLKKLREKVDQNL) adopt a coiled-coil conformation. A Zn(2+)-binding site is contributed by histidine 599. Glutamate 600 is an active-site residue. Zn(2+) is bound by residues histidine 603 and glutamate 662. Aspartate 666 functions as the Proton donor in the catalytic mechanism. N-linked (GlcNAc...) asparagine glycosylation occurs at asparagine 694.

This sequence belongs to the peptidase M13 family. Zn(2+) serves as cofactor. Post-translationally, N-glycosylated. Highly expressed in testis. Also expressed in ovary. Weakly or not expressed in brain, lung, heart, liver, kidney, adrenal gland and intestine.

It localises to the membrane. The protein localises to the secreted. It carries out the reaction Preferential cleavage of polypeptides between hydrophobic residues, particularly with Phe or Tyr at P1'.. With respect to regulation, inhibited by thiorphan and phosphoramidon. Its function is as follows. Metalloprotease involved in sperm function, possibly by modulating the processes of fertilization and early embryonic development. Degrades a broad variety of small peptides with a preference for peptides shorter than 3 kDa containing neutral bulky aliphatic or aromatic amino acid residues. Shares the same substrate specificity with MME and cleaves peptides at the same amide bond. In Mus musculus (Mouse), this protein is Membrane metallo-endopeptidase-like 1 (Mmel1).